The sequence spans 183 residues: MPTFPTTTSSWDNLLNALARSSIWNWLQAMFIGETTSAPQPTNLGILDNLAPAVQIILGISFLTLLAIGLFALWKRSIRSIQKIVMFVITLYQLYKKGSDFFQVLLANPEGSGRQIQDNNNIFLSLGLQEKILKKLQMVENKVRDLEGIIVARKPASKRDCSSEPYCSCSDCQSPLPTSGFTS.

A helical transmembrane segment spans residues Val54 to Trp74. Positions Gly127–Ile150 form a coiled coil.

The protein localises to the membrane. In Mus musculus (Mouse), this protein is Transmembrane and coiled-coil domain-containing protein 2 (Tmco2).